We begin with the raw amino-acid sequence, 101 residues long: Gastrin (101 aa).

An N-terminal signal peptide occupies residues 1-21 (MPRLCVYMLVLVLALATFSEA). The segment at 23–101 (WKPRSQLQDA…FGRRSAEEDQ (79 aa)) is disordered. The span at 25–37 (PRSQLQDASSGPG) shows a compositional bias: polar residues. A Sulfotyrosine modification is found at Tyr-87. Position 92 is a phenylalanine amide (Phe-92). Residues 92 to 101 (FGRRSAEEDQ) show a composition bias toward basic and acidic residues. Position 96 is a phosphoserine (Ser-96). A propeptide spanning residues 96-101 (SAEEDQ) is cleaved from the precursor.

It belongs to the gastrin/cholecystokinin family. Post-translationally, sulfation enhances proteolytic processing, and blocks peptide degradation. Levels of sulfation differ between proteolytically-cleaved gastrins and between tissues. Abundantly expressed in the stomach and duodenum. Low levels in brain, ovary and pancreas.

It is found in the secreted. In terms of biological role, gastrin stimulates the stomach mucosa to produce and secrete hydrochloric acid and the pancreas to secrete its digestive enzymes. It also stimulates smooth muscle contraction and increases blood circulation and water secretion in the stomach and intestine. In Mus musculus (Mouse), this protein is Gastrin (Gast).